The following is a 498-amino-acid chain: Type II secretion system protein E (498 aa).

Residues Cys-394, Cys-397, Cys-425, and Cys-428 each coordinate Zn(2+).

This sequence belongs to the GSP E family. In terms of assembly, forms homooligomers; most probably hexamers. Interacts with OutL/GspL. It depends on Zn(2+) as a cofactor.

The protein resides in the cell inner membrane. The enzyme catalyses ATP + H2O + cellular proteinSide 1 = ADP + phosphate + cellular proteinSide 2.. ATPase component of the type II secretion system required for the energy-dependent secretion of extracellular factors such as proteases and toxins from the periplasm. Acts as a molecular motor to provide the energy that is required for assembly of the pseudopilus and the extrusion of substrates generated in the cytoplasm. The sequence is that of Type II secretion system protein E (outE) from Dickeya dadantii (strain 3937) (Erwinia chrysanthemi (strain 3937)).